The following is a 395-amino-acid chain: Multidrug resistance protein MdtL (395 aa).

A run of 12 helical transmembrane segments spans residues 4 to 24 (FLLC…MYLV), 42 to 62 (IAFS…GKIA), 69 to 89 (PVAI…SRAS), 93 to 113 (LFLS…VVAF), 131 to 151 (LLNG…HLIM), 158 to 178 (SLFY…LFIL), 217 to 237 (VSVI…VMGF), 247 to 267 (ALTA…LGLF), 271 to 291 (TLML…SLAH), 295 to 315 (VTLF…GVAM), 328 to 350 (VASS…LAAI), and 355 to 377 (AMNM…IFSV).

The protein belongs to the major facilitator superfamily. DHA1 family. MdtL (TC 2.A.1.2.22) subfamily.

Its subcellular location is the cell inner membrane. This chain is Multidrug resistance protein MdtL, found in Salmonella schwarzengrund (strain CVM19633).